A 267-amino-acid polypeptide reads, in one-letter code: LexA repressor (267 aa).

A disordered region spans residues 1-44 (MSIDESSDNPTPRPKLGRPPKSEADKRAEKEAQKDGKKPALSTR). Basic and acidic residues predominate over residues 20–38 (PKSEADKRAEKEAQKDGKK). A DNA-binding region (H-T-H motif) is located at residues 65–85 (IREIADAVGLHSTSSVSYHLT). The disordered stretch occupies residues 111-140 (GQLTNESTKKNAGSPQPTSAAIPEPTTEGE). A compositionally biased stretch (polar residues) spans 112 to 129 (QLTNESTKKNAGSPQPTS). Catalysis depends on for autocatalytic cleavage activity residues Ser-191 and Lys-228.

Belongs to the peptidase S24 family. Homodimer.

It carries out the reaction Hydrolysis of Ala-|-Gly bond in repressor LexA.. In terms of biological role, represses a number of genes involved in the response to DNA damage (SOS response), including recA and lexA. In the presence of single-stranded DNA, RecA interacts with LexA causing an autocatalytic cleavage which disrupts the DNA-binding part of LexA, leading to derepression of the SOS regulon and eventually DNA repair. The protein is LexA repressor of Corynebacterium jeikeium (strain K411).